Here is a 96-residue protein sequence, read N- to C-terminus: Aspartyl/glutamyl-tRNA(Asn/Gln) amidotransferase subunit C (96 aa).

It belongs to the GatC family. In terms of assembly, heterotrimer of A, B and C subunits.

It carries out the reaction L-glutamyl-tRNA(Gln) + L-glutamine + ATP + H2O = L-glutaminyl-tRNA(Gln) + L-glutamate + ADP + phosphate + H(+). It catalyses the reaction L-aspartyl-tRNA(Asn) + L-glutamine + ATP + H2O = L-asparaginyl-tRNA(Asn) + L-glutamate + ADP + phosphate + 2 H(+). In terms of biological role, allows the formation of correctly charged Asn-tRNA(Asn) or Gln-tRNA(Gln) through the transamidation of misacylated Asp-tRNA(Asn) or Glu-tRNA(Gln) in organisms which lack either or both of asparaginyl-tRNA or glutaminyl-tRNA synthetases. The reaction takes place in the presence of glutamine and ATP through an activated phospho-Asp-tRNA(Asn) or phospho-Glu-tRNA(Gln). This is Aspartyl/glutamyl-tRNA(Asn/Gln) amidotransferase subunit C from Geobacillus kaustophilus (strain HTA426).